Consider the following 198-residue polypeptide: Ribonuclease HII (198 aa).

Residues 10–198 enclose the RNase H type-2 domain; it reads HLVAGVDEVG…PVKRALGLVS (189 aa). A divalent metal cation-binding residues include Asp-16, Glu-17, and Asp-108.

Belongs to the RNase HII family. The cofactor is Mn(2+). Requires Mg(2+) as cofactor.

The protein resides in the cytoplasm. It carries out the reaction Endonucleolytic cleavage to 5'-phosphomonoester.. Functionally, endonuclease that specifically degrades the RNA of RNA-DNA hybrids. The chain is Ribonuclease HII from Salmonella paratyphi A (strain AKU_12601).